The following is a 157-amino-acid chain: Succinate dehydrogenase assembly factor 2-B, mitochondrial (157 aa).

The transit peptide at 1 to 22 (MLSQWFRGRHLVVRSALFSRRR) directs the protein to the mitochondrion.

This sequence belongs to the SDHAF2 family. Interacts with the flavoprotein subunit within the SDH catalytic dimer.

The protein resides in the mitochondrion matrix. In terms of biological role, plays an essential role in the assembly of succinate dehydrogenase (SDH), an enzyme complex (also referred to as respiratory complex II) that is a component of both the tricarboxylic acid (TCA) cycle and the mitochondrial electron transport chain, and which couples the oxidation of succinate to fumarate with the reduction of ubiquinone (coenzyme Q) to ubiquinol. Required for flavinylation (covalent attachment of FAD) of the flavoprotein subunit of the SDH catalytic dimer. This is Succinate dehydrogenase assembly factor 2-B, mitochondrial from Drosophila mojavensis (Fruit fly).